The primary structure comprises 624 residues: DNA-directed RNA polymerase subunit gamma (624 aa).

Zn(2+)-binding residues include Cys-70, Cys-72, Cys-85, and Cys-88. Mg(2+) is bound by residues Asp-466, Asp-468, and Asp-470.

The protein belongs to the RNA polymerase beta' chain family. RpoC1 subfamily. As to quaternary structure, in cyanobacteria the RNAP catalytic core is composed of 2 alpha, 1 beta, 1 beta', 1 gamma and 1 omega subunit. When a sigma factor is associated with the core the holoenzyme is formed, which can initiate transcription. The cofactor is Mg(2+). It depends on Zn(2+) as a cofactor.

The enzyme catalyses RNA(n) + a ribonucleoside 5'-triphosphate = RNA(n+1) + diphosphate. In terms of biological role, DNA-dependent RNA polymerase catalyzes the transcription of DNA into RNA using the four ribonucleoside triphosphates as substrates. This chain is DNA-directed RNA polymerase subunit gamma, found in Synechococcus sp. (strain ATCC 27144 / PCC 6301 / SAUG 1402/1) (Anacystis nidulans).